A 78-amino-acid chain; its full sequence is Acyl carrier protein (78 aa).

The 77-residue stretch at 1-77 (MSEVEKKVID…DAIDYIEKNL (77 aa)) folds into the Carrier domain. O-(pantetheine 4'-phosphoryl)serine is present on Ser37.

Belongs to the acyl carrier protein (ACP) family. Post-translationally, 4'-phosphopantetheine is transferred from CoA to a specific serine of apo-ACP by AcpS. This modification is essential for activity because fatty acids are bound in thioester linkage to the sulfhydryl of the prosthetic group.

The protein localises to the cytoplasm. It participates in lipid metabolism; fatty acid biosynthesis. Functionally, carrier of the growing fatty acid chain in fatty acid biosynthesis. In Porphyromonas gingivalis (strain ATCC 33277 / DSM 20709 / CIP 103683 / JCM 12257 / NCTC 11834 / 2561), this protein is Acyl carrier protein.